A 459-amino-acid chain; its full sequence is Uterine milk protein (459 aa).

The N-terminal stretch at 1 to 25 (MSHGRMNLALSLVFILCGLFNSIFC) is a signal peptide. N-linked (GlcNAc...) asparagine glycosylation is present at asparagine 268.

This sequence belongs to the serpin family. UTMP subfamily.

This Bos taurus (Bovine) protein is Uterine milk protein.